We begin with the raw amino-acid sequence, 203 residues long: MKAVKLTAAVVVLFMAPYVPITSSRSLAETPNDSIDRHLRHESAQIDSKLKEVEGKHDSNTPLQRRDQTLVAAHRVYDPVSGLACSLVGECMSCPITEKDESFCRETGYRQELACPHSKDEALLQTLEEKQTPRYRPCSPADTVRPGVTFVKFEAIMSLLLAISVTLLRREREKHMSSFDLRKDSRQRVGLLNSSASGVKDSD.

The signal sequence occupies residues 1–24 (MKAVKLTAAVVVLFMAPYVPITSS). Residue N32 is glycosylated (N-linked (GlcNAc...) asparagine). The RxLR signature appears at 37-40 (RHLR). Residue N193 is glycosylated (N-linked (GlcNAc...) asparagine).

The protein belongs to the RxLR effector family.

It is found in the secreted. The protein resides in the host cytoplasm. Secreted effector that does not suppress pattern-triggered immunity (PTI) in plant host. This is Secreted RxLR effector protein RXLR-C28 from Plasmopara halstedii (Downy mildew of sunflower).